Reading from the N-terminus, the 91-residue chain is Small ribosomal subunit protein uS15 (91 aa).

This sequence belongs to the universal ribosomal protein uS15 family. As to quaternary structure, part of the 30S ribosomal subunit. Forms a bridge to the 50S subunit in the 70S ribosome, contacting the 23S rRNA.

Its function is as follows. One of the primary rRNA binding proteins, it binds directly to 16S rRNA where it helps nucleate assembly of the platform of the 30S subunit by binding and bridging several RNA helices of the 16S rRNA. Functionally, forms an intersubunit bridge (bridge B4) with the 23S rRNA of the 50S subunit in the ribosome. This is Small ribosomal subunit protein uS15 from Rickettsia africae (strain ESF-5).